We begin with the raw amino-acid sequence, 113 residues long: MHEMSLCEGIRGIVEDQARRHGFATVKVLRLEIGRFAGVEKAALGFAFDVVMRGSAAEGARLEILELPGRALCYDCGEEAAIQDRFDPCPLCGGGRLMPVGGDEMRIKDMEVQ.

Residue His2 coordinates Ni(2+). Residues Cys73, Cys76, Cys89, and Cys92 each contribute to the Zn(2+) site.

Belongs to the HypA/HybF family.

Functionally, involved in the maturation of [NiFe] hydrogenases. Required for nickel insertion into the metal center of the hydrogenase. The protein is Hydrogenase maturation factor HypA of Cereibacter sphaeroides (Rhodobacter sphaeroides).